The sequence spans 434 residues: Glutamate-1-semialdehyde 2,1-aminomutase 1 (434 aa).

Lys268 bears the N6-(pyridoxal phosphate)lysine mark.

It belongs to the class-III pyridoxal-phosphate-dependent aminotransferase family. HemL subfamily. In terms of assembly, homodimer. Pyridoxal 5'-phosphate serves as cofactor.

It is found in the cytoplasm. It catalyses the reaction (S)-4-amino-5-oxopentanoate = 5-aminolevulinate. It participates in porphyrin-containing compound metabolism; protoporphyrin-IX biosynthesis; 5-aminolevulinate from L-glutamyl-tRNA(Glu): step 2/2. The chain is Glutamate-1-semialdehyde 2,1-aminomutase 1 from Shouchella clausii (strain KSM-K16) (Alkalihalobacillus clausii).